A 101-amino-acid polypeptide reads, in one-letter code: Large ribosomal subunit protein uL24 (101 aa).

It belongs to the universal ribosomal protein uL24 family. In terms of assembly, part of the 50S ribosomal subunit.

One of two assembly initiator proteins, it binds directly to the 5'-end of the 23S rRNA, where it nucleates assembly of the 50S subunit. Its function is as follows. One of the proteins that surrounds the polypeptide exit tunnel on the outside of the subunit. This Thermobifida fusca (strain YX) protein is Large ribosomal subunit protein uL24.